The chain runs to 448 residues: Glucose-6-phosphate isomerase (448 aa).

Residue Glu-290 is the Proton donor of the active site. Active-site residues include His-311 and Lys-425.

The protein belongs to the GPI family.

The protein localises to the cytoplasm. The catalysed reaction is alpha-D-glucose 6-phosphate = beta-D-fructose 6-phosphate. It participates in carbohydrate biosynthesis; gluconeogenesis. It functions in the pathway carbohydrate degradation; glycolysis; D-glyceraldehyde 3-phosphate and glycerone phosphate from D-glucose: step 2/4. Catalyzes the reversible isomerization of glucose-6-phosphate to fructose-6-phosphate. The protein is Glucose-6-phosphate isomerase of Oceanobacillus iheyensis (strain DSM 14371 / CIP 107618 / JCM 11309 / KCTC 3954 / HTE831).